Here is a 203-residue protein sequence, read N- to C-terminus: Large ribosomal subunit protein uL3 (203 aa).

Belongs to the universal ribosomal protein uL3 family. Part of the 50S ribosomal subunit. Forms a cluster with proteins L14 and L19.

In terms of biological role, one of the primary rRNA binding proteins, it binds directly near the 3'-end of the 23S rRNA, where it nucleates assembly of the 50S subunit. In Christiangramia forsetii (strain DSM 17595 / CGMCC 1.15422 / KT0803) (Gramella forsetii), this protein is Large ribosomal subunit protein uL3.